A 501-amino-acid polypeptide reads, in one-letter code: Atypical kinase COQ8, mitochondrial (501 aa).

The N-terminal 29 residues, 1-29 (MVTNMVKLRNLRRLYCSSRLLRTIQNGRI), are a transit peptide targeting the mitochondrion. Positions 41-69 (YTTKSAKEGEENVERKHEEEKKDTLKSSS) are disordered. The segment covering 45-65 (SAKEGEENVERKHEEEKKDTL) has biased composition (basic and acidic residues). A KxGQ motif motif is present at residues 134 to 137 (KIGQ). One can recognise a Protein kinase domain in the interval 188-501 (KFDKIPMAAA…LFKEIFAYKV (314 aa)). The AAAS motif motif lies at 195–198 (AAAS). Residues serine 198, lysine 216, and 303-306 (MTRM) contribute to the ATP site. Aspartate 346 serves as the catalytic Proton acceptor. The ATP site is built by asparagine 351 and aspartate 365.

The protein belongs to the protein kinase superfamily. ADCK protein kinase family. In terms of assembly, forms homopolymers. Predominantly associated with a complex of about 500 kDa.

Its subcellular location is the mitochondrion inner membrane. It participates in cofactor biosynthesis; ubiquinone biosynthesis. Functionally, atypical kinase involved in the biosynthesis of coenzyme Q, also named ubiquinone, an essential lipid-soluble electron transporter for aerobic cellular respiration. Its substrate specificity is still unclear: may act as a protein kinase that mediates phosphorylation of COQ3, COQ5 and/or COQ7. According to other reports, acts as a small molecule kinase, possibly a lipid kinase that phosphorylates a prenyl lipid in the ubiquinone biosynthesis pathway, as suggested by its ability to bind coenzyme Q lipid intermediates. This is Atypical kinase COQ8, mitochondrial (COQ8) from Saccharomyces cerevisiae (strain ATCC 204508 / S288c) (Baker's yeast).